The primary structure comprises 311 residues: Solute carrier family 25 member 36 (311 aa).

Solcar repeat units follow at residues 4-108 (RDTL…CKEK), 116-203 (DSTQ…IKQK), and 224-308 (SDFV…VVYL). Helical transmembrane passes span 7–27 (LVHL…TCPL), 41–57 (LYIS…ASVN), 111–131 (GVFD…AGFT), 180–200 (MSAS…YESI), 226–246 (FVRM…IAYP), and 291–311 (QIPN…LLNG).

This sequence belongs to the mitochondrial carrier (TC 2.A.29) family.

Its subcellular location is the mitochondrion inner membrane. The enzyme catalyses UTP(in) + CTP(out) = UTP(out) + CTP(in). The catalysed reaction is CTP(out) + UDP(in) = CTP(in) + UDP(out). It catalyses the reaction UMP(in) + CTP(out) = UMP(out) + CTP(in). It carries out the reaction dUTP(in) + CTP(out) = dUTP(out) + CTP(in). The enzyme catalyses dUMP(in) + CTP(out) = dUMP(out) + CTP(in). The catalysed reaction is CDP(in) + CTP(out) = CDP(out) + CTP(in). It catalyses the reaction CTP(out) + CMP(in) = CTP(in) + CMP(out). It carries out the reaction dCTP(in) + CTP(out) = dCTP(out) + CTP(in). The enzyme catalyses dCDP(in) + CTP(out) = dCDP(out) + CTP(in). The catalysed reaction is dCMP(in) + CTP(out) = dCMP(out) + CTP(in). It catalyses the reaction GTP(in) + CTP(out) = GTP(out) + CTP(in). It carries out the reaction CTP(out) + GDP(in) = CTP(in) + GDP(out). The enzyme catalyses GMP(in) + CTP(out) = GMP(out) + CTP(in). The catalysed reaction is dGTP(in) + CTP(out) = dGTP(out) + CTP(in). It catalyses the reaction dGMP(in) + CTP(out) = dGMP(out) + CTP(in). It carries out the reaction ITP(in) + CTP(out) = ITP(out) + CTP(in). The enzyme catalyses IDP(in) + CTP(out) = IDP(out) + CTP(in). The catalysed reaction is IMP(in) + CTP(out) = IMP(out) + CTP(in). It catalyses the reaction CTP(out) = CTP(in). Mitochondrial transporter that imports/exports pyrimidine nucleotides into and from mitochondria. Selectively transports cytosine, guanosine, inosine and uridine (deoxy)nucleoside mono-, di-, and triphosphates by antiport mechanism. Catalyzes uniport at much lower rate. May import (deoxy)nucleoside triphosphates in exchange for intramitochondrial (deoxy)nucleoside mono- and diphosphates, thus providing precursors necessary for de novo synthesis of mitochondrial DNA and RNA while exporting products of their catabolism. Participates in mitochondrial genome maintenance, regulation of mitochondrial membrane potential and mitochondrial respiration. This chain is Solute carrier family 25 member 36 (Slc25a36), found in Mus musculus (Mouse).